The following is a 392-amino-acid chain: Probable tRNA sulfurtransferase (392 aa).

A THUMP domain is found at 60–162 (QQVINDLQQV…HDCAIVYGHK (103 aa)). ATP-binding positions include 180–181 (LL), 205–206 (TF), arginine 264, glycine 286, and glutamine 295.

The protein belongs to the ThiI family.

Its subcellular location is the cytoplasm. The catalysed reaction is [ThiI sulfur-carrier protein]-S-sulfanyl-L-cysteine + a uridine in tRNA + 2 reduced [2Fe-2S]-[ferredoxin] + ATP + H(+) = [ThiI sulfur-carrier protein]-L-cysteine + a 4-thiouridine in tRNA + 2 oxidized [2Fe-2S]-[ferredoxin] + AMP + diphosphate. It catalyses the reaction [ThiS sulfur-carrier protein]-C-terminal Gly-Gly-AMP + S-sulfanyl-L-cysteinyl-[cysteine desulfurase] + AH2 = [ThiS sulfur-carrier protein]-C-terminal-Gly-aminoethanethioate + L-cysteinyl-[cysteine desulfurase] + A + AMP + 2 H(+). It participates in cofactor biosynthesis; thiamine diphosphate biosynthesis. Catalyzes the ATP-dependent transfer of a sulfur to tRNA to produce 4-thiouridine in position 8 of tRNAs, which functions as a near-UV photosensor. Also catalyzes the transfer of sulfur to the sulfur carrier protein ThiS, forming ThiS-thiocarboxylate. This is a step in the synthesis of thiazole, in the thiamine biosynthesis pathway. The sulfur is donated as persulfide by IscS. The protein is Probable tRNA sulfurtransferase of Ureaplasma urealyticum serovar 10 (strain ATCC 33699 / Western).